The sequence spans 131 residues: Protein NEGATIVE REGULATOR OF RESISTANCE (131 aa).

Disordered regions lie at residues 1–33 and 51–131; these read MDATTTDATTAKRKRPAASDIADDAPTTVDEVS and TRRL…RAPA. The Nuclear localization signal signature appears at 12–15; the sequence is KRKR. Low complexity predominate over residues 116–131; sequence PPSDAPATPRSARAPA.

It belongs to the NPR1-interactor family. In terms of assembly, interacts with NPR1/NH1. Interacts with NPR2/NH2.

It is found in the nucleus. Acts as a negative regulator of disease resistance. Acts on basal resistance, age-related resistance and resistance mediated by the LRR receptor kinase XA21. Plants over-expressing NRR display enhanced susceptibility to the bacterial blight Xanthomonas oryzae pv. oryzae (Xoo). The chain is Protein NEGATIVE REGULATOR OF RESISTANCE from Oryza sativa subsp. indica (Rice).